Consider the following 130-residue polypeptide: MAENQNYGTGRRKSSSARVFIKPGSGKIVINQRELDVYFGRETSRMIVRQPLELVELTDKLDLYVTVKGGGISGQAGAIRHGITRALIEYDETLRPALRAAGFVTRDARRVERKKIGLHKARRRPQYSKR.

The protein belongs to the universal ribosomal protein uS9 family.

The sequence is that of Small ribosomal subunit protein uS9 from Histophilus somni (strain 129Pt) (Haemophilus somnus).